The sequence spans 946 residues: Calcium-transporting ATPase type 2C member 2 (946 aa).

Residues 1 to 106 lie on the Cytoplasmic side of the membrane; it reads MVEGRVSEFL…DNSEPVWKKY (106 aa). Residues 71 to 95 form an interaction with ORAI1 region; the sequence is VDLHTGLSEFSVTQRRLAHGWNEFV. The chain crosses the membrane as a helical span at residues 107–127; it reads LDQFKNPLILLLLGSALVSVL. Over 128–129 the chain is Extracellular; the sequence is TK. Residues 130-150 traverse the membrane as a helical segment; the sequence is EYEDAVSIATAVLVVVTVAFI. At 151-231 the chain is on the cytoplasmic side; it reads QEYRSEKSLE…EAEPCSKTDS (81 aa). Residues 232–252 traverse the membrane as a helical segment; sequence PLTGGGDLTTLSNIVFMGTLV. Residues 253–293 are Extracellular-facing; sequence QYGRGQGVVIGTGESSQFGEVFKMMQAEETPKTPLQKSMDR. Phosphothreonine is present on Thr264. Phosphoserine is present on residues Ser267 and Ser268. Residues 294 to 314 form a helical membrane-spanning segment; that stretch reads LGKQLTLFSFGIIGLIMLIGW. Topologically, residues 315–331 are cytoplasmic; it reads SQGKQLLSMFTIGVSLA. 4 residues coordinate Ca(2+): Val332, Ala333, Ile335, and Glu337. A helical transmembrane segment spans residues 332–352; that stretch reads VAAIPEGLPIVVMVTLVLGVL. Over 353-750 the chain is Extracellular; that stretch reads RMAKKRVIVK…ISALSLITLS (398 aa). Asp379 serves as the catalytic 4-aspartylphosphate intermediate. 2 residues coordinate Mg(2+): Asp674 and Asp678. A helical transmembrane segment spans residues 751-771; it reads TVFNLPSPLNAMQILWINIIM. Positions 768 and 772 each coordinate Ca(2+). The Cytoplasmic segment spans residues 772–804; that stretch reads DGPPAQSLGVEPVDKDAFRQPPRSVRDTILSRA. Residues 805–825 form a helical membrane-spanning segment; that stretch reads LILKILMSAAIIISGTLFIFW. The Extracellular portion of the chain corresponds to 826-837; it reads KEMPEDRASTPR. Residues 838-855 traverse the membrane as a helical segment; sequence TTTMTFTCFVFFDLFNAL. Residues 856 to 874 lie on the Cytoplasmic side of the membrane; that stretch reads TCRSQTKLIFEIGFLRNHM. Residues 875 to 895 traverse the membrane as a helical segment; it reads FLYSVLGSILGQLAVIYIPPL. The Extracellular segment spans residues 896-905; it reads QRVFQTENLG. A helical transmembrane segment spans residues 906–926; sequence ALDLLFLTGLASSVFILSELL. Topologically, residues 927-946 are cytoplasmic; the sequence is KLCEKYCCSPKRVQMHPEDV.

Belongs to the cation transport ATPase (P-type) (TC 3.A.3) family. Type IIA subfamily. Interacts (via N-terminus) with ORAI1 (via N- and C-termini); this interaction regulates Ca(2+) influx at the plasma membrane. Highly expressed in the gastrointestinal and respiratory tracts, prostate, thyroid, salivary, and mammary glands. Expressed in colon epithelial cells (at protein level). Expressed in brain and testis (at protein level).

The protein localises to the golgi apparatus. It is found in the trans-Golgi network membrane. Its subcellular location is the cell membrane. The protein resides in the basolateral cell membrane. The catalysed reaction is Ca(2+)(in) + ATP + H2O = Ca(2+)(out) + ADP + phosphate + H(+). It catalyses the reaction Mn(2+)(in) + ATP + H2O = Mn(2+)(out) + ADP + phosphate + H(+). Its function is as follows. ATP-driven pump that supplies the Golgi apparatus with Ca(2+) and Mn(2+) ions, both essential cofactors for processing and trafficking of newly synthesized proteins in the secretory pathway. Within a catalytic cycle, acquires Ca(2+) or Mn(2+) ions on the cytoplasmic side of the membrane and delivers them to the lumenal side. The transfer of ions across the membrane is coupled to ATP hydrolysis and is associated with a transient phosphorylation that shifts the pump conformation from inward-facing to outward-facing state. Induces Ca(2+) influx independently of its ATP-driven pump function. At the basolateral membrane of mammary epithelial cells, interacts with Ca(2+) channel ORAI1 and mediates Ca(2+) entry independently of the Ca(2+) content of endoplasmic reticulum or Golgi stores. May facilitate transepithelial transport of large quantities of Ca(2+) for milk secretion via activation of Ca(2+) influx channels at the plasma membrane and active Ca(2+) transport at the Golgi apparatus. This chain is Calcium-transporting ATPase type 2C member 2, found in Homo sapiens (Human).